A 132-amino-acid chain; its full sequence is Large ribosomal subunit protein uL14 (132 aa).

The protein belongs to the universal ribosomal protein uL14 family. As to quaternary structure, part of the 50S ribosomal subunit. Forms a cluster with proteins L3 and L24e, part of which may contact the 16S rRNA in 2 intersubunit bridges.

In terms of biological role, binds to 23S rRNA. Forms part of two intersubunit bridges in the 70S ribosome. The polypeptide is Large ribosomal subunit protein uL14 (Methanospirillum hungatei JF-1 (strain ATCC 27890 / DSM 864 / NBRC 100397 / JF-1)).